The following is a 348-amino-acid chain: MRPFKLMGHERSLTQVKYNQEGDLLFSVAKDSSASVWFASNGERLGTFEGHMGTIWSIDVDSNTHYAVTGSADLTIKLWLVETGECVYTYEMPTPVRRVVFSPDNSKLLSVTDQVMGQVGTISVFDVNNEEPKNQSSKPSLVIPTRDGAKKVTIAGWSAGGKYIIAGHEDGLVSKYDGATGEFIDSVQAHGIHNEEKIHLVTDIQFAPEDKSYFITSSKDKCSCLIDVETLEIMKVYKADAPMNTAAITPLKDFVILGGGQEARNVTTTAESQGKFEARFYHKIFIDEIGRVKGHFGPLNTIAVHPDGTGYASGGEDGFIRLHSFDKSYYDFEYDAERTERAIAAGTT.

WD repeat units lie at residues 8 to 49 (GHER…GTFE), 51 to 91 (HMGT…YTYE), 93 to 135 (PTPV…PKNQ), 147 to 186 (DGAKKVTIAGWSAGGKYIIAGHEDGLVSKYDGATGEFIDS), 196 to 238 (EKIH…KVYK), and 294 to 333 (GHFGPLNTIAVHPDGTGYASGGEDGFIRLHSFDKSYYDFE).

This sequence belongs to the eIF-3 subunit I family. As to quaternary structure, component of the eukaryotic translation initiation factor 3 (eIF-3) complex.

The protein localises to the cytoplasm. In terms of biological role, component of the eukaryotic translation initiation factor 3 (eIF-3) complex, which is involved in protein synthesis of a specialized repertoire of mRNAs and, together with other initiation factors, stimulates binding of mRNA and methionyl-tRNAi to the 40S ribosome. The eIF-3 complex specifically targets and initiates translation of a subset of mRNAs involved in cell proliferation. The polypeptide is Eukaryotic translation initiation factor 3 subunit I (Meyerozyma guilliermondii (strain ATCC 6260 / CBS 566 / DSM 6381 / JCM 1539 / NBRC 10279 / NRRL Y-324) (Yeast)).